The primary structure comprises 187 residues: UPF0301 protein PMI0339 (187 aa).

It belongs to the UPF0301 (AlgH) family.

This is UPF0301 protein PMI0339 from Proteus mirabilis (strain HI4320).